The following is an 872-amino-acid chain: Alanine--tRNA ligase (872 aa).

Residues His567, His571, Cys669, and His673 each coordinate Zn(2+).

Belongs to the class-II aminoacyl-tRNA synthetase family. Zn(2+) serves as cofactor.

The protein localises to the cytoplasm. The catalysed reaction is tRNA(Ala) + L-alanine + ATP = L-alanyl-tRNA(Ala) + AMP + diphosphate. Catalyzes the attachment of alanine to tRNA(Ala) in a two-step reaction: alanine is first activated by ATP to form Ala-AMP and then transferred to the acceptor end of tRNA(Ala). Also edits incorrectly charged Ser-tRNA(Ala) and Gly-tRNA(Ala) via its editing domain. The chain is Alanine--tRNA ligase from Streptococcus pneumoniae (strain Hungary19A-6).